The following is a 434-amino-acid chain: MPAAVSISQEILKPHLEIQGGHTLSRELKVSGAKNSALVLMTSALLSEGPLELHNVPQLTDIQGMADILASLGVRVKRSQETVWLQADGLHHAEPPYDLVNGLRASFFCIGPLLGRLGHAKVPLPGGCRIGARPVVEHIRGLKALGAMVKVEHGVVTASVPGTSRRLKGAAIVLDCPSVGATETILMAAVLAEGTSTIENAAQEPEVQDLAKMLNAMGARVSGAGGPIITIEGVERLHGCNYSVIPDRIEAGTFLIAAAITRSIVRVSPVIPEHLNAVLQKLRDCGCTLEIDKQGITLIPGDLHGVDIITQPFPGFPTDLQAPFMALLTTAKGTSVVTEKIYENRMQHVAELQRMGASIRLQGNTAVVEGIPQLSAAPVSGNDLRAAAALVLAGLAAHGISQVDGLNHLDRGYDEIETKLNASGAHILRHQPSG.

Residue 34–35 (KN) participates in phosphoenolpyruvate binding. Residue Arg104 coordinates UDP-N-acetyl-alpha-D-glucosamine. Residue Cys128 is the Proton donor of the active site. Cys128 is subject to 2-(S-cysteinyl)pyruvic acid O-phosphothioketal. 2 residues coordinate UDP-N-acetyl-alpha-D-glucosamine: Asp319 and Ile341.

The protein belongs to the EPSP synthase family. MurA subfamily.

The protein localises to the cytoplasm. It catalyses the reaction phosphoenolpyruvate + UDP-N-acetyl-alpha-D-glucosamine = UDP-N-acetyl-3-O-(1-carboxyvinyl)-alpha-D-glucosamine + phosphate. It functions in the pathway cell wall biogenesis; peptidoglycan biosynthesis. Cell wall formation. Adds enolpyruvyl to UDP-N-acetylglucosamine. In Prochlorococcus marinus (strain MIT 9313), this protein is UDP-N-acetylglucosamine 1-carboxyvinyltransferase.